The sequence spans 432 residues: Type I restriction enzyme MjaIX specificity subunit (432 aa).

Belongs to the type-I restriction system S methylase family. The type I restriction/modification system is composed of three polypeptides R, M and S.

The specificity (S) subunit of a type I restriction enzyme; this subunit dictates DNA sequence specificity. The M and S subunits together form a methyltransferase (MTase) that methylates A-3 on the top and A-2 on the bottom strand of the sequence 5'-CCAN(5)GTR-3'. In the presence of the R subunit the complex can also act as an endonuclease, binding to the same target sequence but cutting the DNA some distance from this site. Whether the DNA is cut or modified depends on the methylation state of the target sequence. When the target site is unmodified, the DNA is cut. When the target site is hemimethylated, the complex acts as a maintenance MTase modifying the DNA so that both strands become methylated. After locating a non-methylated recognition site, the enzyme complex serves as a molecular motor that translocates DNA in an ATP-dependent manner until a collision occurs that triggers cleavage. The chain is Type I restriction enzyme MjaIX specificity subunit (hsdS) from Methanocaldococcus jannaschii (strain ATCC 43067 / DSM 2661 / JAL-1 / JCM 10045 / NBRC 100440) (Methanococcus jannaschii).